The sequence spans 309 residues: Histone-lysine N-methyltransferase SETMAR (309 aa).

The 64-residue stretch at 74–137 (PGCACIETPC…RCRNRVVQNG (64 aa)) folds into the Pre-SET domain. Zn(2+) is bound by residues C76, C78, C83, C88, C90, C119, C123, C125, and C129. One can recognise an SET domain in the interval 140–264 (FLLQVFQTEK…PGEELSYDYS (125 aa)). S-adenosyl-L-methionine-binding positions include 150 to 152 (KGW), Y193, R221, and 224 to 225 (NH). The Zn(2+) site is built by C227, C288, C290, and C295. Positions 284-300 (PRKPCYCGAQSCTTFLP) constitute a Post-SET domain.

This sequence belongs to the class V-like SAM-binding methyltransferase superfamily.

The protein localises to the nucleus. The protein resides in the chromosome. The enzyme catalyses L-lysyl(36)-[histone H3] + 2 S-adenosyl-L-methionine = N(6),N(6)-dimethyl-L-lysyl(36)-[histone H3] + 2 S-adenosyl-L-homocysteine + 2 H(+). Its function is as follows. Histone methyltransferase that methylates 'Lys-4' and 'Lys-36' of histone H3, 2 specific tags for epigenetic transcriptional activation. Specifically mediates dimethylation of H3 'Lys-36'. The chain is Histone-lysine N-methyltransferase SETMAR from Mus musculus (Mouse).